Reading from the N-terminus, the 425-residue chain is Riboflavin biosynthesis protein RibBA (425 aa).

The segment at 1–204 (MTRLDSVERA…IADLIEWRRK (204 aa)) is DHBP synthase. Residues 28–29 (RE), Asp33, 141–145 (RPGHT), and Glu165 contribute to the D-ribulose 5-phosphate site. A Mg(2+)-binding site is contributed by Glu29. His144 contributes to the Mg(2+) binding site. Residues 205 to 425 (HEKHIERVAE…HLPGEFGGAL (221 aa)) form a GTP cyclohydrolase II region. Residue 259 to 263 (RVHSE) participates in GTP binding. Cys264, Cys275, and Cys277 together coordinate Zn(2+). Residues Gln280, 303–305 (EGR), and Thr325 contribute to the GTP site. Catalysis depends on Asp337, which acts as the Proton acceptor; for GTP cyclohydrolase activity. Residue Arg339 is the Nucleophile; for GTP cyclohydrolase activity of the active site. The GTP site is built by Thr360 and Lys365.

The protein in the N-terminal section; belongs to the DHBP synthase family. This sequence in the C-terminal section; belongs to the GTP cyclohydrolase II family. Mg(2+) serves as cofactor. Mn(2+) is required as a cofactor. It depends on Zn(2+) as a cofactor.

The enzyme catalyses D-ribulose 5-phosphate = (2S)-2-hydroxy-3-oxobutyl phosphate + formate + H(+). It catalyses the reaction GTP + 4 H2O = 2,5-diamino-6-hydroxy-4-(5-phosphoribosylamino)-pyrimidine + formate + 2 phosphate + 3 H(+). The protein operates within cofactor biosynthesis; riboflavin biosynthesis; 2-hydroxy-3-oxobutyl phosphate from D-ribulose 5-phosphate: step 1/1. It functions in the pathway cofactor biosynthesis; riboflavin biosynthesis; 5-amino-6-(D-ribitylamino)uracil from GTP: step 1/4. Its function is as follows. Catalyzes the conversion of D-ribulose 5-phosphate to formate and 3,4-dihydroxy-2-butanone 4-phosphate. In terms of biological role, catalyzes the conversion of GTP to 2,5-diamino-6-ribosylamino-4(3H)-pyrimidinone 5'-phosphate (DARP), formate and pyrophosphate. The polypeptide is Riboflavin biosynthesis protein RibBA (Mycobacterium marinum (strain ATCC BAA-535 / M)).